Here is an 84-residue protein sequence, read N- to C-terminus: MSEQTRIQLGRVISSKMDKSIVVAIERMVKHPMYGKYIKRTTKLHAHDENNECNLGDTVEVRECRPLSKTKSWTLVRIVEKARV.

This sequence belongs to the universal ribosomal protein uS17 family. In terms of assembly, part of the 30S ribosomal subunit.

Its function is as follows. One of the primary rRNA binding proteins, it binds specifically to the 5'-end of 16S ribosomal RNA. The polypeptide is Small ribosomal subunit protein uS17 (Photobacterium profundum (strain SS9)).